Reading from the N-terminus, the 778-residue chain is DNA repair protein crb2 (778 aa).

Residues 35–56 (KVNASINPSPPRSNDNSNKEFS) form a disordered region. Thr73 bears the Phosphothreonine; by ATM mark. Ser80 is modified (phosphoserine; by ATM). The interval 141-245 (VSNSSQILSP…PPAFLPETSE (105 aa)) is interaction with rad4. A Phosphothreonine modification is found at Thr187. A Phosphothreonine; by cdc2 modification is found at Thr215. The residue at position 235 (Thr235) is a Phosphothreonine. The interval 358-493 (SRRSFKNRVL…RRFQGRDLSF (136 aa)) is tudor-like. Residues 370–404 (FKGYPSFYYPATLVAPVHSAVTSSIMYKVQFDDAT) are interaction with dimethylated histone H4. Residues 535-653 (SNQLIFDDCV…RVVDFSPYLL (119 aa)) form the BRCT domain.

As to quaternary structure, homodimer. Dimerization is mediated via the BRCT domain. Interacts (via BRCT domain) with rad3. Interacts with rad4 (via BRCT1,2 domains); a single rad4 molecule interacts simultaneously with both Thr-187 phosphorylation sites in a crb2 dimer. Interacts (via Tudor domain) with histone H4K20me2. Interacts (via BRCT dmain) with histone H2AS128ph (gamma-H2A). Interacts with chk1. Interacts with sad1. Phosphorylation of Thr-73 and Ser-80 by rad3/ATM promotes interaction with chk1. Phosphorylation at Thr-187 is dependent on phosphorylation at Thr-215 and Thr-235. Phosphorylation at Thr-215 and Thr-235 may prime the non-canonical Thr-187 site for cdc2/CDK phosphorylation.

The protein localises to the nucleus. Essential for cell cycle arrest at the G1 and G2 stages following DNA damage by X-, and UV-irradiation, or inactivation of DNA ligase. Plays a role in the response to DNA damage. Interaction with rad4 via its phosphorylation sites in the N-terminus couples the DNA checkpoint apparatus to chromatin via interaction of its C-terminal BRCT domains with epigenetic modifications on histones H4 and H2A, respectively, in the G1/S phase of the cell cycle, and facilitates recruitment of the checkpoint kinase chk1. In Schizosaccharomyces pombe (strain 972 / ATCC 24843) (Fission yeast), this protein is DNA repair protein crb2.